The chain runs to 354 residues: Holliday junction branch migration complex subunit RuvB (354 aa).

Positions 1-24 are disordered; sequence MSIQTDDFAPVPPPKRVVSAAPTS. The interval 5–195 is large ATPase domain (RuvB-L); it reads TDDFAPVPPP…FGIVARLEFY (191 aa). ATP is bound by residues Leu34, Arg35, Gly76, Lys79, Thr80, Thr81, 142 to 144, Arg185, Tyr195, and Arg232; that span reads EDY. Thr80 is a binding site for Mg(2+). A small ATPAse domain (RuvB-S) region spans residues 196–266; it reads TPEELSRIVT…IAQRALAMLD (71 aa). The interval 269 to 354 is head domain (RuvB-H); the sequence is PQGFDVMDRK…RQHTDLFGPA (86 aa). 2 residues coordinate DNA: Arg324 and Arg329.

Belongs to the RuvB family. Homohexamer. Forms an RuvA(8)-RuvB(12)-Holliday junction (HJ) complex. HJ DNA is sandwiched between 2 RuvA tetramers; dsDNA enters through RuvA and exits via RuvB. An RuvB hexamer assembles on each DNA strand where it exits the tetramer. Each RuvB hexamer is contacted by two RuvA subunits (via domain III) on 2 adjacent RuvB subunits; this complex drives branch migration. In the full resolvosome a probable DNA-RuvA(4)-RuvB(12)-RuvC(2) complex forms which resolves the HJ.

The protein resides in the cytoplasm. It catalyses the reaction ATP + H2O = ADP + phosphate + H(+). Functionally, the RuvA-RuvB-RuvC complex processes Holliday junction (HJ) DNA during genetic recombination and DNA repair, while the RuvA-RuvB complex plays an important role in the rescue of blocked DNA replication forks via replication fork reversal (RFR). RuvA specifically binds to HJ cruciform DNA, conferring on it an open structure. The RuvB hexamer acts as an ATP-dependent pump, pulling dsDNA into and through the RuvAB complex. RuvB forms 2 homohexamers on either side of HJ DNA bound by 1 or 2 RuvA tetramers; 4 subunits per hexamer contact DNA at a time. Coordinated motions by a converter formed by DNA-disengaged RuvB subunits stimulates ATP hydrolysis and nucleotide exchange. Immobilization of the converter enables RuvB to convert the ATP-contained energy into a lever motion, pulling 2 nucleotides of DNA out of the RuvA tetramer per ATP hydrolyzed, thus driving DNA branch migration. The RuvB motors rotate together with the DNA substrate, which together with the progressing nucleotide cycle form the mechanistic basis for DNA recombination by continuous HJ branch migration. Branch migration allows RuvC to scan DNA until it finds its consensus sequence, where it cleaves and resolves cruciform DNA. In Paracidovorax citrulli (strain AAC00-1) (Acidovorax citrulli), this protein is Holliday junction branch migration complex subunit RuvB.